A 293-amino-acid polypeptide reads, in one-letter code: MPELPEVETVRRGLQPVMEGAKIVAAEARRGDLRFPFQPDFAKRLQGQTVRGLGRRAKYLLADLSSGDVLLMHLGMSGSFRVIKQDDEETPGEFHYPRGKDSVHDHVVFHMSSGADIVFNDPRRFGFMKIIGRGEIEREPHLKDLGPEPLGNEFDAAMLATACAGKKTSLKAALLDQRVVAGLGNIYVCEALFRAHLSPRRLAATLATRKGEPTDHARRLVEAIHAVLNEAIRAGGSSLRDHRQTSGELGYFQHSFQVYDREGEPCRTDGCGGVVKRFVQNGRSTFWCPKCQR.

The active-site Schiff-base intermediate with DNA is the Pro-2. Glu-3 functions as the Proton donor in the catalytic mechanism. The active-site Proton donor; for beta-elimination activity is the Lys-58. 3 residues coordinate DNA: His-104, Arg-123, and Lys-166. The FPG-type zinc-finger motif lies at Gln-257–Arg-293. The Proton donor; for delta-elimination activity role is filled by Arg-283.

This sequence belongs to the FPG family. As to quaternary structure, monomer. It depends on Zn(2+) as a cofactor.

It catalyses the reaction Hydrolysis of DNA containing ring-opened 7-methylguanine residues, releasing 2,6-diamino-4-hydroxy-5-(N-methyl)formamidopyrimidine.. The enzyme catalyses 2'-deoxyribonucleotide-(2'-deoxyribose 5'-phosphate)-2'-deoxyribonucleotide-DNA = a 3'-end 2'-deoxyribonucleotide-(2,3-dehydro-2,3-deoxyribose 5'-phosphate)-DNA + a 5'-end 5'-phospho-2'-deoxyribonucleoside-DNA + H(+). Functionally, involved in base excision repair of DNA damaged by oxidation or by mutagenic agents. Acts as a DNA glycosylase that recognizes and removes damaged bases. Has a preference for oxidized purines, such as 7,8-dihydro-8-oxoguanine (8-oxoG). Has AP (apurinic/apyrimidinic) lyase activity and introduces nicks in the DNA strand. Cleaves the DNA backbone by beta-delta elimination to generate a single-strand break at the site of the removed base with both 3'- and 5'-phosphates. This is Formamidopyrimidine-DNA glycosylase from Bradyrhizobium sp. (strain BTAi1 / ATCC BAA-1182).